The sequence spans 396 residues: Purine ribonucleoside efflux pump NepI (396 aa).

The Cytoplasmic portion of the chain corresponds to 1–21 (MSEFIAENRGADAITRPNWSA). The helical transmembrane segment at 22–42 (VFSVAFCVACLIIVEFLPVSL) threads the bilayer. Over 43-54 (LTPMAQDLGISE) the chain is Periplasmic. The chain crosses the membrane as a helical span at residues 55–75 (GVAGQSVTVTAFVAMFASLFI). Over 76 to 85 (TQTIQATDRR) the chain is Cytoplasmic. A helical membrane pass occupies residues 86–106 (NVVILFAVLLTLSCLLVSFAN). A topological domain (periplasmic) is located at residue S107. Residues 108 to 128 (FSLLLIGRACLGLALGGFWAM) form a helical membrane-spanning segment. Topologically, residues 129-147 (SASLTMRLVPPRTVPKALS) are cytoplasmic. A helical transmembrane segment spans residues 148-168 (VIFGAVSIALVIAAPLGSFLG). Residues 169-175 (ELIGWRN) are Periplasmic-facing. Residues 176 to 196 (VFNAAAVMGVLCIFWIIKSLP) form a helical membrane-spanning segment. Residues 197–215 (SLPGEPSHQKQNTFRLLQR) lie on the Cytoplasmic side of the membrane. The chain crosses the membrane as a helical span at residues 216–236 (PGVMAGMIAIFMSFAGQFAFF). Over 237-255 (TYIRPVYMNLAGFSVDGLT) the chain is Periplasmic. Residues 256–276 (LVLLSFGIASFIGTSLSSFIL) traverse the membrane as a helical segment. Topologically, residues 277–281 (KRSVK) are cytoplasmic. A helical membrane pass occupies residues 282-302 (LALAGAPLILAVSALVLTLWG). The Periplasmic segment spans residues 303–305 (SDK). Residues 306-326 (IVATGVAIIWGLTFALVPVGW) traverse the membrane as a helical segment. Over 327 to 343 (STWITRSLADQAEKAGS) the chain is Cytoplasmic. The chain crosses the membrane as a helical span at residues 344–364 (IQVAVIQLANTCGAAIGGYAL). At 365–366 (DN) the chain is on the periplasmic side. Residues 367–387 (IGLTSPLMFSGTLMLLTALLV) traverse the membrane as a helical segment. Topologically, residues 388 to 396 (TAKVKMKKS) are cytoplasmic.

It belongs to the major facilitator superfamily. DHA1 family. NepI (TC 2.A.1.2.26) subfamily.

Its subcellular location is the cell inner membrane. The enzyme catalyses inosine(in) + H(+)(out) = inosine(out) + H(+)(in). It catalyses the reaction guanosine(in) + H(+)(out) = guanosine(out) + H(+)(in). Functionally, involved in the efflux of purine ribonucleosides, such as inosine and guanosine. This Shigella sonnei (strain Ss046) protein is Purine ribonucleoside efflux pump NepI.